Consider the following 142-residue polypeptide: Large ribosomal subunit protein uL11 (142 aa).

It belongs to the universal ribosomal protein uL11 family. Part of the ribosomal stalk of the 50S ribosomal subunit. Interacts with L10 and the large rRNA to form the base of the stalk. L10 forms an elongated spine to which L12 dimers bind in a sequential fashion forming a multimeric L10(L12)X complex. One or more lysine residues are methylated.

Functionally, forms part of the ribosomal stalk which helps the ribosome interact with GTP-bound translation factors. This Mycobacterium leprae (strain Br4923) protein is Large ribosomal subunit protein uL11.